A 139-amino-acid polypeptide reads, in one-letter code: Small ribosomal subunit protein uS12 (139 aa).

The tract at residues 1 to 44 (MPTINQLVRKPRQSKITKSKSPALNKGYNSFKKSLTDVKSPQKR) is disordered. The segment covering 9–18 (RKPRQSKITK) has biased composition (basic residues). The span at 19–39 (SKSPALNKGYNSFKKSLTDVK) shows a compositional bias: polar residues. Asp-102 bears the 3-methylthioaspartic acid mark.

The protein belongs to the universal ribosomal protein uS12 family. As to quaternary structure, part of the 30S ribosomal subunit. Contacts proteins S8 and S17. May interact with IF1 in the 30S initiation complex.

In terms of biological role, with S4 and S5 plays an important role in translational accuracy. Interacts with and stabilizes bases of the 16S rRNA that are involved in tRNA selection in the A site and with the mRNA backbone. Located at the interface of the 30S and 50S subunits, it traverses the body of the 30S subunit contacting proteins on the other side and probably holding the rRNA structure together. The combined cluster of proteins S8, S12 and S17 appears to hold together the shoulder and platform of the 30S subunit. This chain is Small ribosomal subunit protein uS12, found in Lysinibacillus sphaericus (strain C3-41).